The sequence spans 432 residues: Bifunctional IPC transferase and DIPP synthase (432 aa).

The segment at Pro3–Ala225 is mobA-like NTP transferase. Residues Leu9–Ala11, Lys22, and Glu113 each bind CTP. Glu113 is a binding site for Mg(2+). The tract at residues Val226–Val426 is CDP-alcohol phosphatidyltransferases. A run of 3 helical transmembrane segments spans residues Phe264–Leu284, Ile337–Thr356, and Val385–Leu405.

In the N-terminal section; belongs to the MobA family. It in the C-terminal section; belongs to the CDP-alcohol phosphatidyltransferase class-I family. It depends on Mg(2+) as a cofactor.

It localises to the membrane. It carries out the reaction 1D-myo-inositol 3-phosphate + CTP + H(+) = CDP-1L-myo-inositol + diphosphate. The catalysed reaction is CDP-1L-myo-inositol + 1D-myo-inositol 3-phosphate = bis(1L-myo-inositol) 3,1'-phosphate 1-phosphate + CMP + H(+). In terms of biological role, involved in biosynthesis of di-myo-inositol phosphate (DIP), a widespread organic solute in microorganisms adapted to hot environments. Catalyzes the condensation of CTP and L-myo-inositol-1-phosphate into CDP-L-myo-inositol, as well as the biosynthesis of di-myo-inositol-1,3'-phosphate-1'-phosphate (DIPP) from CDP-L-myo-inositol and L-myo-inositol-1-phosphate. The protein is Bifunctional IPC transferase and DIPP synthase of Thermococcus kodakarensis (strain ATCC BAA-918 / JCM 12380 / KOD1) (Pyrococcus kodakaraensis (strain KOD1)).